Here is a 149-residue protein sequence, read N- to C-terminus: Putative pre-16S rRNA nuclease (149 aa).

The protein belongs to the YqgF nuclease family.

It is found in the cytoplasm. Its function is as follows. Could be a nuclease involved in processing of the 5'-end of pre-16S rRNA. The chain is Putative pre-16S rRNA nuclease from Burkholderia ambifaria (strain MC40-6).